The primary structure comprises 386 residues: Na(+)/H(+) antiporter NhaA (386 aa).

10 helical membrane-spanning segments follow: residues 10-30 (EFSI…NVAP), 45-65 (LSFH…IAAV), 84-104 (LNPL…YLAL), 116-136 (GWGI…RLIF), 142-162 (VIAF…VIIA), 169-189 (VLPV…IAFI), 261-281 (IIVD…GFSA), 287-307 (WLVF…FALL), 323-343 (HLLV…FVAG), and 358-378 (GAIL…LLGI).

This sequence belongs to the NhaA Na(+)/H(+) (TC 2.A.33) antiporter family.

The protein localises to the cell inner membrane. It catalyses the reaction Na(+)(in) + 2 H(+)(out) = Na(+)(out) + 2 H(+)(in). In terms of biological role, na(+)/H(+) antiporter that extrudes sodium in exchange for external protons. This is Na(+)/H(+) antiporter NhaA from Geotalea uraniireducens (strain Rf4) (Geobacter uraniireducens).